Consider the following 346-residue polypeptide: MTYNIVALPGDGIGPEILSGTLELLELISKKYKFDYQLTSYDFGGAAIDSHGVPLPDDTLNACKNADAILLGAVGGPQWTDPNNRPEQGLLALRKSLGLFANIRPTKVTEGTSHFSPIKESRVKGTDFIIVRELTSGLYFGEPRHIDNQSALDSLTYTKKEIERIAMVAFELASQRKKKLTSVDKENVLATSKLWRKTINEISHEFPDVKVNHLLVDACSMQLISQPTNFDVIVTENLFGDILSDEASTIPGSLGLSPSASFSLEGPRLYEPIHGSAPDIANQNLANPFGMILSLAMCLRESFNFEDAASELEQAVYQLIKDGKTTKDLNGHYTTSDIFNELKKNY.

Residue 76-87 (GPQWTDPNNRPE) coordinates NAD(+). Positions 94, 104, 132, and 217 each coordinate substrate. Mg(2+)-binding residues include Asp-217, Asp-241, and Asp-245. Position 275-287 (275-287 (GSAPDIANQNLAN)) interacts with NAD(+).

This sequence belongs to the isocitrate and isopropylmalate dehydrogenases family. LeuB type 1 subfamily. In terms of assembly, homodimer. Requires Mg(2+) as cofactor. Mn(2+) serves as cofactor.

It localises to the cytoplasm. The enzyme catalyses (2R,3S)-3-isopropylmalate + NAD(+) = 4-methyl-2-oxopentanoate + CO2 + NADH. It participates in amino-acid biosynthesis; L-leucine biosynthesis; L-leucine from 3-methyl-2-oxobutanoate: step 3/4. Functionally, catalyzes the oxidation of 3-carboxy-2-hydroxy-4-methylpentanoate (3-isopropylmalate) to 3-carboxy-4-methyl-2-oxopentanoate. The product decarboxylates to 4-methyl-2 oxopentanoate. This Staphylococcus haemolyticus (strain JCSC1435) protein is 3-isopropylmalate dehydrogenase.